Consider the following 487-residue polypeptide: MPN domain-containing protein (487 aa).

A disordered region spans residues methionine 1–alanine 55. Position 2 is an N-acetylalanine (alanine 2). Serine 8 is subject to Phosphoserine. The span at glutamate 15–aspartate 28 shows a compositional bias: acidic residues. A compositionally biased stretch (gly residues) spans threonine 33–alanine 55. The RAMA domain maps to threonine 61–histidine 156. Serine 113, serine 115, and tryptophan 135 together coordinate DNA. The interval alanine 163–methionine 217 is disordered. Phosphoserine occurs at positions 168 and 171. The segment covering glutamate 172–valine 187 has biased composition (acidic residues). Positions valine 258–valine 393 constitute an MPN domain. Zn(2+)-binding residues include histidine 335, histidine 337, and aspartate 348. The JAMM motif signature appears at histidine 335–aspartate 348.

It belongs to the peptidase M67 family. As to quaternary structure, monomer. Mainly monomoric, but when binds to dsDNA, forms homotetramer assembled into two homodimers. May interact with histones; this interaction is facilitated by. Post-translationally, degraded following binding to N(6)-methyladenosine methylated DNA (m6A).

Probable protease. Acts as a sensor of N(6)-methyladenosine methylation on DNA (m6A): recognizes and binds m6A DNA, leading to its degradation. Binds only double strand DNA (dsDNA) in a sequence-independent manner. The protein is MPN domain-containing protein of Mus musculus (Mouse).